We begin with the raw amino-acid sequence, 182 residues long: uncharacterized protein (182 aa).

Positions 1-23 (MILSDQNFLQTQWKEPQTAQSKN) are enriched in polar residues. Residues 1–33 (MILSDQNFLQTQWKEPQTAQSKNTESKCEFHGN) are disordered.

Belongs to the peptidase M24 family.

This is an uncharacterized protein from Caenorhabditis elegans.